Here is a 467-residue protein sequence, read N- to C-terminus: ATP synthase subunit beta (467 aa).

ATP is bound at residue glycine 154–threonine 161.

Belongs to the ATPase alpha/beta chains family. F-type ATPases have 2 components, CF(1) - the catalytic core - and CF(0) - the membrane proton channel. CF(1) has five subunits: alpha(3), beta(3), gamma(1), delta(1), epsilon(1). CF(0) has three main subunits: a(1), b(2) and c(9-12). The alpha and beta chains form an alternating ring which encloses part of the gamma chain. CF(1) is attached to CF(0) by a central stalk formed by the gamma and epsilon chains, while a peripheral stalk is formed by the delta and b chains.

The protein resides in the cell inner membrane. It carries out the reaction ATP + H2O + 4 H(+)(in) = ADP + phosphate + 5 H(+)(out). Functionally, produces ATP from ADP in the presence of a proton gradient across the membrane. The catalytic sites are hosted primarily by the beta subunits. The polypeptide is ATP synthase subunit beta (Leptospira interrogans serogroup Icterohaemorrhagiae serovar copenhageni (strain Fiocruz L1-130)).